The following is a 268-amino-acid chain: Undecaprenyl-diphosphatase (268 aa).

Transmembrane regions (helical) follow at residues 4-24, 50-70, 84-104, 109-129, 144-164, 184-204, 214-234, and 245-265; these read STTL…FIPV, IQLG…ISVI, AAVL…HGFI, FETP…LLFV, VPLG…VPGV, AAEF…AFDL, GALG…VLVV, and GYSL…AALL.

This sequence belongs to the UppP family.

It localises to the cell inner membrane. It carries out the reaction di-trans,octa-cis-undecaprenyl diphosphate + H2O = di-trans,octa-cis-undecaprenyl phosphate + phosphate + H(+). Catalyzes the dephosphorylation of undecaprenyl diphosphate (UPP). Confers resistance to bacitracin. The polypeptide is Undecaprenyl-diphosphatase (Cereibacter sphaeroides (strain ATCC 17025 / ATH 2.4.3) (Rhodobacter sphaeroides)).